The primary structure comprises 276 residues: Insulin-like growth factor-binding protein 2-A (276 aa).

The signal sequence occupies residues Met-1–Ser-22. Residues Met-24–Lys-105 enclose the IGFBP N-terminal domain. 9 disulfide bridges follow: Cys-28–Cys-55, Cys-31–Cys-57, Cys-39–Cys-58, Cys-46–Cys-61, Cys-69–Cys-82, Cys-76–Cys-102, Cys-180–Cys-214, Cys-225–Cys-236, and Cys-238–Cys-259. The region spanning Gln-177–Cys-259 is the Thyroglobulin type-1 domain. The short motif at Arg-254–Asp-256 is the Cell attachment site element.

As to quaternary structure, interacts equally well with igf1 and igf2. In embryos at 24 hpf, initially expressed in the lens and cranial region, and at 48 and 72 hpf in the brain boundary vasculature. Expression in these regions persists throughout the hatching period and by 96 hpf expression is most abundant in the liver. In both male and female adults, highest expression is in the liver with modest expression in the brain. In male but not females adults, expressed at a low level in muscle and gonad. Also expressed in the adult intestine.

It localises to the secreted. Functionally, IGF-binding proteins prolong the half-life of the IGFs and have been shown to either inhibit or stimulate the growth promoting effects of the IGFs on cell culture. They alter the interaction of IGFs with their cell surface receptors. The chain is Insulin-like growth factor-binding protein 2-A (igfbp2a) from Danio rerio (Zebrafish).